We begin with the raw amino-acid sequence, 187 residues long: Proline-rich protein 29 (187 aa).

A disordered region spans residues 133–187; it reads HQPPWQGEPRIQHQPPASRQEEVRDVPPPPPPSATGTVGADVPPASDYYDAESLP.

This chain is Proline-rich protein 29 (Prr29), found in Mus musculus (Mouse).